A 540-amino-acid polypeptide reads, in one-letter code: Phosphoenolpyruvate carboxykinase (ATP) (540 aa).

Arginine 65 lines the substrate pocket. The residue at position 87 (lysine 87) is an N6-acetyllysine. 2 residues coordinate substrate: tyrosine 207 and lysine 213. ATP contacts are provided by residues lysine 213, histidine 232, and 248-256 (GLSGTGKTT). Mn(2+) contacts are provided by lysine 213 and histidine 232. Residue aspartate 269 coordinates Mn(2+). ATP is bound by residues glutamate 297, arginine 333, 449–450 (RI), and threonine 455. Position 333 (arginine 333) interacts with substrate. Lysine 523 carries the post-translational modification N6-acetyllysine.

This sequence belongs to the phosphoenolpyruvate carboxykinase (ATP) family. In terms of assembly, monomer. Requires Mn(2+) as cofactor.

Its subcellular location is the cytoplasm. It catalyses the reaction oxaloacetate + ATP = phosphoenolpyruvate + ADP + CO2. It participates in carbohydrate biosynthesis; gluconeogenesis. Functionally, involved in the gluconeogenesis. Catalyzes the conversion of oxaloacetate (OAA) to phosphoenolpyruvate (PEP) through direct phosphoryl transfer between the nucleoside triphosphate and OAA. This Escherichia coli O6:H1 (strain CFT073 / ATCC 700928 / UPEC) protein is Phosphoenolpyruvate carboxykinase (ATP).